Reading from the N-terminus, the 141-residue chain is Guanyl-specific ribonuclease Sa3 (141 aa).

The or 43 signal peptide spans 1–36; sequence MRIPPRLVALAGAAAVAATLIAGPVAAAAPASHAVA. C52 and C141 are oxidised to a cystine. E99 serves as the catalytic Proton acceptor. The active-site Proton donor is H130.

It belongs to the ribonuclease N1/T1 family.

Its subcellular location is the secreted. The enzyme catalyses [RNA] containing guanosine + H2O = an [RNA fragment]-3'-guanosine-3'-phosphate + a 5'-hydroxy-ribonucleotide-3'-[RNA fragment].. The protein is Guanyl-specific ribonuclease Sa3 (rnaSA3) of Kitasatospora aureofaciens (Streptomyces aureofaciens).